A 56-amino-acid chain; its full sequence is MAVQQNKKSRSKRGMRRSHDSLSTAQLSVDATSGELHRRHNVTADGFYRGQKVINK.

Residues 1 to 39 (MAVQQNKKSRSKRGMRRSHDSLSTAQLSVDATSGELHRR) are disordered. A compositionally biased stretch (basic residues) spans 7–16 (KKSRSKRGMR). Over residues 21–31 (SLSTAQLSVDA) the composition is skewed to polar residues.

It belongs to the bacterial ribosomal protein bL32 family.

This is Large ribosomal subunit protein bL32 from Shewanella piezotolerans (strain WP3 / JCM 13877).